The chain runs to 236 residues: tRNA1(Val) (adenine(37)-N6)-methyltransferase (236 aa).

It belongs to the methyltransferase superfamily. tRNA (adenine-N(6)-)-methyltransferase family.

Its subcellular location is the cytoplasm. It catalyses the reaction adenosine(37) in tRNA1(Val) + S-adenosyl-L-methionine = N(6)-methyladenosine(37) in tRNA1(Val) + S-adenosyl-L-homocysteine + H(+). Functionally, specifically methylates the adenine in position 37 of tRNA(1)(Val) (anticodon cmo5UAC). This is tRNA1(Val) (adenine(37)-N6)-methyltransferase from Aeromonas hydrophila subsp. hydrophila (strain ATCC 7966 / DSM 30187 / BCRC 13018 / CCUG 14551 / JCM 1027 / KCTC 2358 / NCIMB 9240 / NCTC 8049).